Consider the following 292-residue polypeptide: UPF0761 membrane protein Ping_3482 (292 aa).

6 consecutive transmembrane segments (helical) span residues 43–63, 100–120, 139–159, 179–199, 209–229, and 243–263; these read LLSI…FPVF, MSMM…STID, FTIY…SLAL, LLSL…YTLV, ALIG…LFRL, and ALAV…IVLI.

It belongs to the UPF0761 family.

The protein resides in the cell inner membrane. The protein is UPF0761 membrane protein Ping_3482 of Psychromonas ingrahamii (strain DSM 17664 / CCUG 51855 / 37).